Consider the following 329-residue polypeptide: Acetyl-coenzyme A carboxylase carboxyl transferase subunit alpha (329 aa).

The CoA carboxyltransferase C-terminal domain occupies 40–294 (QLETLAARRR…KNALEKHLSE (255 aa)).

Belongs to the AccA family. As to quaternary structure, acetyl-CoA carboxylase is a heterohexamer composed of biotin carboxyl carrier protein (AccB), biotin carboxylase (AccC) and two subunits each of ACCase subunit alpha (AccA) and ACCase subunit beta (AccD).

The protein resides in the cytoplasm. The enzyme catalyses N(6)-carboxybiotinyl-L-lysyl-[protein] + acetyl-CoA = N(6)-biotinyl-L-lysyl-[protein] + malonyl-CoA. It functions in the pathway lipid metabolism; malonyl-CoA biosynthesis; malonyl-CoA from acetyl-CoA: step 1/1. Its function is as follows. Component of the acetyl coenzyme A carboxylase (ACC) complex. First, biotin carboxylase catalyzes the carboxylation of biotin on its carrier protein (BCCP) and then the CO(2) group is transferred by the carboxyltransferase to acetyl-CoA to form malonyl-CoA. The chain is Acetyl-coenzyme A carboxylase carboxyl transferase subunit alpha from Prochlorococcus marinus (strain NATL1A).